A 139-amino-acid polypeptide reads, in one-letter code: Small ribosomal subunit protein uS12 (139 aa).

D102 is modified (3-methylthioaspartic acid).

This sequence belongs to the universal ribosomal protein uS12 family. In terms of assembly, part of the 30S ribosomal subunit. Contacts proteins S8 and S17. May interact with IF1 in the 30S initiation complex.

Its function is as follows. With S4 and S5 plays an important role in translational accuracy. Interacts with and stabilizes bases of the 16S rRNA that are involved in tRNA selection in the A site and with the mRNA backbone. Located at the interface of the 30S and 50S subunits, it traverses the body of the 30S subunit contacting proteins on the other side and probably holding the rRNA structure together. The combined cluster of proteins S8, S12 and S17 appears to hold together the shoulder and platform of the 30S subunit. In Mycoplasma capricolum subsp. capricolum (strain California kid / ATCC 27343 / NCTC 10154), this protein is Small ribosomal subunit protein uS12.